We begin with the raw amino-acid sequence, 424 residues long: Protein arginine N-methyltransferase 2 (424 aa).

Disordered regions lie at residues 67 to 89 and 151 to 212; these read DEAQ…EQKS and YEPL…SSRY. The segment covering 71-89 has biased composition (polar residues); that stretch reads TETNGVNGETSSASTEQKS. 2 stretches are compositionally biased toward low complexity: residues 163–173 and 187–201; these read TGQGEDAANEP and ETTA…ASTE. Residues 205 to 424 form the RMT2 domain; the sequence is PDVTSSRYLD…YRLPLCKFMD (220 aa). S-adenosyl-L-methionine-binding positions include tyrosine 212, methionine 241, 261–266, 282–284, 309–310, and aspartate 329; these read HGMGIV, EAH, and WQ.

It belongs to the class I-like SAM-binding methyltransferase superfamily. RMT2 methyltransferase family. Monomer.

It localises to the cytoplasm. The protein resides in the nucleus. S-adenosyl-L-methionine-dependent protein-arginine N-methyltransferase that methylates the delta-nitrogen atom of arginine residues to form N5-methylarginine (type IV) in target proteins. Monomethylates ribosomal protein L12. The polypeptide is Protein arginine N-methyltransferase 2 (Aspergillus fumigatus (strain ATCC MYA-4609 / CBS 101355 / FGSC A1100 / Af293) (Neosartorya fumigata)).